The primary structure comprises 181 residues: Inorganic pyrophosphatase (181 aa).

Substrate contacts are provided by K16, R30, and Y42. Mg(2+)-binding residues include D52, D57, and D89. Residue Y126 participates in substrate binding.

This sequence belongs to the PPase family. Homohexamer. Requires Mg(2+) as cofactor.

The protein resides in the cytoplasm. It catalyses the reaction diphosphate + H2O = 2 phosphate + H(+). Catalyzes the hydrolysis of inorganic pyrophosphate (PPi) forming two phosphate ions. This is Inorganic pyrophosphatase from Malacoplasma penetrans (strain HF-2) (Mycoplasma penetrans).